Reading from the N-terminus, the 309-residue chain is Glutaminase (309 aa).

Positions 64, 114, 160, 167, 191, 243, and 261 each coordinate substrate.

The protein belongs to the glutaminase family. Homotetramer.

The enzyme catalyses L-glutamine + H2O = L-glutamate + NH4(+). The chain is Glutaminase from Rhizobium leguminosarum bv. trifolii (strain WSM2304).